The chain runs to 211 residues: MTTLTRQDLNFGQVVADVLCEFLEVAVHLILYVREVYPVGIFQKRKKYNVPVQMSCHPELNQYIQDTLHCVKPLLEKNDVEKVVVVILDKEHRPVEKFVFEITQPPLLPISSDSLLSHVEQLLRAFILKISVCDAVLDHNPPGCTFTVLVHTREAATRNMEKIQVIKDFPWILADEQDVHMHDPRLIPLKTMTSDILKMQLYVEERAHKSS.

An HORMA domain is found at 13–203 (QVVADVLCEF…SDILKMQLYV (191 aa)). A mediates interaction with REV1 and REV3L and homodimerization region spans residues 21–155 (EFLEVAVHLI…FTVLVHTREA (135 aa)).

Homooligomer. Heterodimer with REV3L. This dimer forms the minimal DNA polymerase zeta complex (Pol-zeta2), with REV3L bearing DNA polymerase catalytic activity, although its activity is very low in this context. Component of the tetrameric Pol-zeta complex (Pol-zeta4), which consists of REV3L, MAD2L2, POLD2 and POLD3; Pol-zeta4 is the fully active form of DNA polymerase zeta. Component of the shieldin complex, consisting of SHLD1, SHLD2, SHLD3 and MAD2L2/REV7. Within the complex, SHLD2 forms a scaffold which interacts with a SHLD3-MAD2L2 subcomplex via its N-terminus, and with SHLD1 via its C-terminus. Interacts with REV1. Interacts with ADAM9. Interacts with CHAMP1. Interacts with FZR1 (in complex with the anaphase promoting complex APC). May interact with CDC20. Interacts with RAN. Interacts with ELK1; the interaction is direct and recruits MAD2L2 to ELK1-specific promoters. May interact with the JNK kinases MAPK8 and/or MAPK9 to stimulate ELK1 phosphorylation and transcriptional activity upon DNA damage. Interacts with TCF7L2; prevents its binding to promoters and negatively modulates its transcriptional activity. Interacts with YY1AP1. Interacts with PRCC; the interaction is direct. Interacts with POGZ. Interacts with ASTE1.

The protein resides in the nucleus. Its subcellular location is the cytoplasm. It localises to the cytoskeleton. It is found in the spindle. In terms of biological role, adapter protein able to interact with different proteins and involved in different biological processes. Mediates the interaction between the error-prone DNA polymerase zeta catalytic subunit REV3L and the inserter polymerase REV1, thereby mediating the second polymerase switching in translesion DNA synthesis. Translesion DNA synthesis releases the replication blockade of replicative polymerases, stalled in presence of DNA lesions. Component of the shieldin complex, which plays an important role in repair of DNA double-stranded breaks (DSBs). During G1 and S phase of the cell cycle, the complex functions downstream of TP53BP1 to promote non-homologous end joining (NHEJ) and suppress DNA end resection. Mediates various NHEJ-dependent processes including immunoglobulin class-switch recombination, and fusion of unprotected telomeres. May also regulate another aspect of cellular response to DNA damage through regulation of the JNK-mediated phosphorylation and activation of the transcriptional activator ELK1. Inhibits the FZR1- and probably CDC20-mediated activation of the anaphase promoting complex APC thereby regulating progression through the cell cycle. Regulates TCF7L2-mediated gene transcription and may play a role in epithelial-mesenchymal transdifferentiation. The chain is Mitotic spindle assembly checkpoint protein MAD2B (MAD2L2) from Bos taurus (Bovine).